A 199-amino-acid polypeptide reads, in one-letter code: uncharacterized protein (199 aa).

This is an uncharacterized protein from Connochaetes taurinus (Blue wildebeest).